The primary structure comprises 53 residues: UPF0337 protein LJ_0034.1 (53 aa).

The tract at residues 27–53 (AREVEGKAQQAKGKVKSKATEVKEDLE) is disordered. Over residues 44-53 (KATEVKEDLE) the composition is skewed to basic and acidic residues.

It belongs to the UPF0337 (CsbD) family.

This Lactobacillus johnsonii (strain CNCM I-12250 / La1 / NCC 533) protein is UPF0337 protein LJ_0034.1.